Consider the following 93-residue polypeptide: MVSPRVRLAALALSVCAILCLGMHASAFPPKPDNPGDNASPEQMARYKAAVRHYINLITRQRYGKRALTPENWIYRDPAEERVTYGLDDYAMW.

An N-terminal signal peptide occupies residues 1-27 (MVSPRVRLAALALSVCAILCLGMHASA). Position 63 is a tyrosine amide (tyrosine 63). Positions 65 to 93 (KRALTPENWIYRDPAEERVTYGLDDYAMW) are cleaved as a propeptide — C-terminal extension.

This sequence belongs to the NPY family. As to expression, gut and medial reticulospinal neuron system in the brainstem.

The protein localises to the secreted. Its function is as follows. Gastrointestinal hormone and neuropeptide. This Lampetra fluviatilis (European river lamprey) protein is Peptide YY-like (pyy).